The sequence spans 136 residues: 2-hydroxyisobutanoyl-CoA mutase small subunit (136 aa).

The B12-binding domain maps to 5–133 (PIRVLLAKVG…DSIRSLVAAR (129 aa)). H18 is an adenosylcob(III)alamin binding site.

It belongs to the acyl-CoA mutase small subunit family. As to quaternary structure, homotetramer composed of two large substrate-binding subunits (HcmA) and two small cobalamin-binding subunits (HcmB). Requires adenosylcob(III)alamin as cofactor.

It catalyses the reaction 2-hydroxyisobutanoyl-CoA = (3S)-3-hydroxybutanoyl-CoA. Its function is as follows. Together with HcmA, catalyzes the isomerization of 2-hydroxyisobutyryl-CoA and 3-hydroxybutyryl-CoA. Is specific for 2-hydroxyisobutyryl-CoA and (S)-3-hydroxybutyryl-CoA, and shows only very low activity with (R)-3-hydroxybutyryl-CoA, isobutyryl-CoA and butyryl-CoA. In vitro, can isomerize pivalyl-CoA and isovaleryl-CoA, with much lower efficiency. Plays a central role in the degradation of substrates bearing a tert-butyl moiety, such as the fuel oxygenate methyl tert-butyl ether (MTBE) and its metabolites. The polypeptide is 2-hydroxyisobutanoyl-CoA mutase small subunit (Aquincola tertiaricarbonis).